A 370-amino-acid chain; its full sequence is tRNA-specific 2-thiouridylase MnmA (370 aa).

ATP-binding positions include 9–16 (GISGGVDS) and methionine 35. The interaction with target base in tRNA stretch occupies residues 107–109 (NPD). The active-site Nucleophile is the cysteine 112. Cysteine 112 and cysteine 209 are oxidised to a cystine. Glycine 137 contacts ATP. The interval 159 to 161 (KDQ) is interaction with tRNA. The active-site Cysteine persulfide intermediate is the cysteine 209.

This sequence belongs to the MnmA/TRMU family.

The protein localises to the cytoplasm. It catalyses the reaction S-sulfanyl-L-cysteinyl-[protein] + uridine(34) in tRNA + AH2 + ATP = 2-thiouridine(34) in tRNA + L-cysteinyl-[protein] + A + AMP + diphosphate + H(+). In terms of biological role, catalyzes the 2-thiolation of uridine at the wobble position (U34) of tRNA, leading to the formation of s(2)U34. This is tRNA-specific 2-thiouridylase MnmA from Mycoplasma pneumoniae (strain ATCC 29342 / M129 / Subtype 1) (Mycoplasmoides pneumoniae).